A 252-amino-acid polypeptide reads, in one-letter code: MGQKTNPNGLRLGIIRTWESQWCVNDKEIPNLIKEDFLIRKLINNFAKKSAISQIDIERLKEKNKNRITISVHTAKPGVIIGKDGDTRNKLVAKLKELTQKDVNLNVLEVKNSDKVALLIAQNMAEKLENRMFFRRVQKMAIQKAIKAGAKGVKTLISGRLGGAEIARSEGHAEGRVPLHTLRADIDYAAVEAHTTYGVLGIKVWIFHGEVLPGQTILDTRKLFASQSSNNPNRRPRNFKGGNNNHVNAKKN.

In terms of domain architecture, KH type-2 spans Ile-39 to Lys-111. The tract at residues Ser-226–Asn-252 is disordered.

The protein belongs to the universal ribosomal protein uS3 family. Part of the 30S ribosomal subunit. Forms a tight complex with proteins S10 and S14.

Binds the lower part of the 30S subunit head. Binds mRNA in the 70S ribosome, positioning it for translation. This chain is Small ribosomal subunit protein uS3, found in Aster yellows witches'-broom phytoplasma (strain AYWB).